The chain runs to 220 residues: NADH-quinone oxidoreductase subunit I (220 aa).

4Fe-4S ferredoxin-type domains lie at 71–102 (LQRL…IITH) and 112–141 (DSYT…MGNR). 8 residues coordinate [4Fe-4S] cluster: Cys-82, Cys-85, Cys-88, Cys-92, Cys-121, Cys-124, Cys-127, and Cys-131. Residues 187–220 (MQATPLDYVQEPSKEESKEETPTNPESNKGDENV) form a disordered region. Residues 198–207 (PSKEESKEET) show a composition bias toward basic and acidic residues.

Belongs to the complex I 23 kDa subunit family. NDH-1 is composed of 14 different subunits. Subunits NuoA, H, J, K, L, M, N constitute the membrane sector of the complex. Requires [4Fe-4S] cluster as cofactor.

It localises to the cell inner membrane. It carries out the reaction a quinone + NADH + 5 H(+)(in) = a quinol + NAD(+) + 4 H(+)(out). Its function is as follows. NDH-1 shuttles electrons from NADH, via FMN and iron-sulfur (Fe-S) centers, to quinones in the respiratory chain. The immediate electron acceptor for the enzyme in this species is believed to be ubiquinone. Couples the redox reaction to proton translocation (for every two electrons transferred, four hydrogen ions are translocated across the cytoplasmic membrane), and thus conserves the redox energy in a proton gradient. The sequence is that of NADH-quinone oxidoreductase subunit I from Helicobacter pylori (strain HPAG1).